A 346-amino-acid polypeptide reads, in one-letter code: Nucleoplasmin-like protein ANO39 (346 aa).

At serine 2 the chain carries N-acetylserine. Asparagine 85 is a glycosylation site (N-linked (GlcNAc...) asparagine). Residues 123–141 are compositionally biased toward acidic residues; sequence DEEELEEDDEEEEEEDEVE. Residues 123–285 are disordered; sequence DEEELEEDDE…KAKAKTDTKL (163 aa). Serine 145 carries the phosphoserine; by CDC2 modification. Positions 171–180 are enriched in basic and acidic residues; the sequence is AKLDKDADKK. The span at 181–247 shows a compositional bias: acidic residues; it reads EDDDEEEDDE…EEEEDEDEES (67 aa). N-linked (GlcNAc...) asparagine glycosylation occurs at asparagine 264. Over residues 271–285 the composition is skewed to basic and acidic residues; that stretch reads GDNKPKAKAKTDTKL.

Belongs to the nucleoplasmin family. Post-translationally, phosphorylation occurs in oocytes during the progression of the first meiotic M phase. No phosphorylation is observed in immature oocytes. As to expression, expressed specifically in the oocytes of the ovaries.

The protein resides in the nucleus. It localises to the nucleolus. The protein localises to the cytoplasm. Functionally, binds double-stranded RNA and both single-stranded and double-stranded DNA. The sequence is that of Nucleoplasmin-like protein ANO39 from Patiria pectinifera (Starfish).